The following is a 450-amino-acid chain: Serine--tRNA ligase, cytoplasmic (450 aa).

238 to 240 (TSE) serves as a coordination point for L-serine. Residues 271–273 (RRE) and Val287 contribute to the ATP site. Glu294 is an L-serine binding site. 358–361 (ELVS) contacts ATP. Thr396 provides a ligand contact to L-serine.

This sequence belongs to the class-II aminoacyl-tRNA synthetase family. Type-1 seryl-tRNA synthetase subfamily. Homodimer. The tRNA molecule binds across the dimer.

It is found in the cytoplasm. It localises to the cytosol. The catalysed reaction is tRNA(Ser) + L-serine + ATP = L-seryl-tRNA(Ser) + AMP + diphosphate + H(+). Its function is as follows. Catalyzes the attachment of serine to tRNA(Ser) in a two-step reaction: serine is first activated by ATP to form Ser-AMP and then transferred to the acceptor end of tRNA(Ser). In Schizosaccharomyces pombe (strain 972 / ATCC 24843) (Fission yeast), this protein is Serine--tRNA ligase, cytoplasmic.